Consider the following 302-residue polypeptide: Putative S-adenosyl-L-methionine-dependent methyltransferase MUL_2961 (302 aa).

Residues aspartate 128 and 157-158 (DL) contribute to the S-adenosyl-L-methionine site.

Belongs to the UPF0677 family.

In terms of biological role, exhibits S-adenosyl-L-methionine-dependent methyltransferase activity. This Mycobacterium ulcerans (strain Agy99) protein is Putative S-adenosyl-L-methionine-dependent methyltransferase MUL_2961.